A 365-amino-acid chain; its full sequence is Chorismate synthase (365 aa).

NADP(+) is bound by residues Arg-48 and Arg-54. FMN is bound by residues 125 to 127 (RSS), 237 to 238 (NA), Gly-277, 292 to 296 (KPTSS), and Arg-318.

The protein belongs to the chorismate synthase family. Homotetramer. FMNH2 is required as a cofactor.

The catalysed reaction is 5-O-(1-carboxyvinyl)-3-phosphoshikimate = chorismate + phosphate. It functions in the pathway metabolic intermediate biosynthesis; chorismate biosynthesis; chorismate from D-erythrose 4-phosphate and phosphoenolpyruvate: step 7/7. Catalyzes the anti-1,4-elimination of the C-3 phosphate and the C-6 proR hydrogen from 5-enolpyruvylshikimate-3-phosphate (EPSP) to yield chorismate, which is the branch point compound that serves as the starting substrate for the three terminal pathways of aromatic amino acid biosynthesis. This reaction introduces a second double bond into the aromatic ring system. This Paracidovorax citrulli (strain AAC00-1) (Acidovorax citrulli) protein is Chorismate synthase.